The sequence spans 275 residues: Nuclear egress protein 2 (275 aa).

Residues 1–251 (MAGLGKPYTG…GLKHLRIGPP (251 aa)) lie on the Perinuclear space side of the membrane. Residues 137 to 181 (KGRLGLDARPMMASMWISCFVRMPRVQLAFRFMGPEDAGRTRRIL) form an interaction with NEC1 region. A helical transmembrane segment spans residues 252–272 (ALVLAAGLVLGAAIWWVVGAG). Topologically, residues 273-275 (ARL) are nuclear.

The protein belongs to the herpesviridae NEC2 protein family. As to quaternary structure, forms a heterohexameric complex with NEC1. Interacts with glycoprotein D; this interaction recruits glycoprotein D and glycoprotein M to the inner nuclear membrane. In terms of processing, phosphorylated by viral kinase US3.

Its subcellular location is the host nucleus inner membrane. Plays an essential role in virion nuclear egress, the first step of virion release from infected cell. Within the host nucleus, NEC1 interacts with the newly formed capsid through the vertexes and directs it to the inner nuclear membrane by associating with NEC2. Induces the budding of the capsid at the inner nuclear membrane as well as its envelopment into the perinuclear space. There, the NEC1/NEC2 complex promotes the fusion of the enveloped capsid with the outer nuclear membrane and the subsequent release of the viral capsid into the cytoplasm where it will reach the secondary budding sites in the host Golgi or trans-Golgi network. The polypeptide is Nuclear egress protein 2 (Homo sapiens (Human)).